The following is a 154-amino-acid chain: Ribosomal RNA large subunit methyltransferase H (154 aa).

Residues Leu70, Gly102, and 121 to 126 each bind S-adenosyl-L-methionine; that span reads LSRMTL.

The protein belongs to the RNA methyltransferase RlmH family. Homodimer.

It localises to the cytoplasm. The enzyme catalyses pseudouridine(1915) in 23S rRNA + S-adenosyl-L-methionine = N(3)-methylpseudouridine(1915) in 23S rRNA + S-adenosyl-L-homocysteine + H(+). Specifically methylates the pseudouridine at position 1915 (m3Psi1915) in 23S rRNA. The polypeptide is Ribosomal RNA large subunit methyltransferase H (Citrifermentans bemidjiense (strain ATCC BAA-1014 / DSM 16622 / JCM 12645 / Bem) (Geobacter bemidjiensis)).